Reading from the N-terminus, the 493-residue chain is Cardiolipin synthase 1 (493 aa).

2 helical membrane-spanning segments follow: residues Phe-13–Phe-33 and Trp-45–Phe-65. PLD phosphodiesterase domains lie at Met-228–Tyr-255 and Glu-406–Ser-433. Active-site residues include His-233, Lys-235, Asp-240, His-411, Lys-413, and Asp-418.

It belongs to the phospholipase D family. Cardiolipin synthase subfamily.

The protein resides in the cell membrane. It catalyses the reaction 2 a 1,2-diacyl-sn-glycero-3-phospho-(1'-sn-glycerol) = a cardiolipin + glycerol. Catalyzes the reversible phosphatidyl group transfer from one phosphatidylglycerol molecule to another to form cardiolipin (CL) (diphosphatidylglycerol) and glycerol. In Staphylococcus aureus (strain MRSA252), this protein is Cardiolipin synthase 1 (cls1).